Consider the following 301-residue polypeptide: Protoheme IX farnesyltransferase (301 aa).

The next 8 helical transmembrane spans lie at 25 to 45, 47 to 67, 97 to 117, 119 to 139, 147 to 167, 173 to 193, 235 to 255, and 279 to 299; these read VTQL…PGMV, WTPL…AFAI, ILLF…TFAN, LTMW…TLLL, IVIG…AVTG, AWIL…ALAL, FISG…GALF, and IVYL…RVLI.

The protein belongs to the UbiA prenyltransferase family. Protoheme IX farnesyltransferase subfamily.

The protein localises to the cell inner membrane. The catalysed reaction is heme b + (2E,6E)-farnesyl diphosphate + H2O = Fe(II)-heme o + diphosphate. Its pathway is porphyrin-containing compound metabolism; heme O biosynthesis; heme O from protoheme: step 1/1. Converts heme B (protoheme IX) to heme O by substitution of the vinyl group on carbon 2 of heme B porphyrin ring with a hydroxyethyl farnesyl side group. The polypeptide is Protoheme IX farnesyltransferase (Paraburkholderia xenovorans (strain LB400)).